A 617-amino-acid chain; its full sequence is Chaperone protein HscA homolog (617 aa).

The protein belongs to the heat shock protein 70 family.

In terms of biological role, chaperone involved in the maturation of iron-sulfur cluster-containing proteins. Has a low intrinsic ATPase activity which is markedly stimulated by HscB. The sequence is that of Chaperone protein HscA homolog from Actinobacillus pleuropneumoniae serotype 5b (strain L20).